The following is a 125-amino-acid chain: Small ribosomal subunit protein uS13 (125 aa).

It belongs to the universal ribosomal protein uS13 family. As to quaternary structure, part of the 30S ribosomal subunit. Forms a loose heterodimer with protein S19. Forms two bridges to the 50S subunit in the 70S ribosome.

Its function is as follows. Located at the top of the head of the 30S subunit, it contacts several helices of the 16S rRNA. In the 70S ribosome it contacts the 23S rRNA (bridge B1a) and protein L5 of the 50S subunit (bridge B1b), connecting the 2 subunits; these bridges are implicated in subunit movement. Contacts the tRNAs in the A and P-sites. This Gluconobacter oxydans (strain 621H) (Gluconobacter suboxydans) protein is Small ribosomal subunit protein uS13.